Consider the following 91-residue polypeptide: Small ribosomal subunit protein uS19 (91 aa).

Belongs to the universal ribosomal protein uS19 family.

Its function is as follows. Protein S19 forms a complex with S13 that binds strongly to the 16S ribosomal RNA. The polypeptide is Small ribosomal subunit protein uS19 (Pseudomonas putida (strain ATCC 700007 / DSM 6899 / JCM 31910 / BCRC 17059 / LMG 24140 / F1)).